Consider the following 692-residue polypeptide: Elongation factor G (692 aa).

A tr-type G domain is found at Glu-8–Val-283. Residues Ala-17–Thr-24, Asp-81–His-85, and Asn-135–Asp-138 each bind GTP.

This sequence belongs to the TRAFAC class translation factor GTPase superfamily. Classic translation factor GTPase family. EF-G/EF-2 subfamily.

Its subcellular location is the cytoplasm. Functionally, catalyzes the GTP-dependent ribosomal translocation step during translation elongation. During this step, the ribosome changes from the pre-translocational (PRE) to the post-translocational (POST) state as the newly formed A-site-bound peptidyl-tRNA and P-site-bound deacylated tRNA move to the P and E sites, respectively. Catalyzes the coordinated movement of the two tRNA molecules, the mRNA and conformational changes in the ribosome. The protein is Elongation factor G of Caulobacter vibrioides (strain ATCC 19089 / CIP 103742 / CB 15) (Caulobacter crescentus).